Here is a 1466-residue protein sequence, read N- to C-terminus: DNA-directed RNA polymerase subunit beta'' (1466 aa).

Cys220, Cys296, Cys303, and Cys306 together coordinate Zn(2+). The disordered stretch occupies residues 618 to 725; it reads TREEDLEDEY…EDEYDSSEED (108 aa). Composition is skewed to acidic residues over residues 621–631, 639–651, and 707–725; these read EDLEDEYETLE, DEYE…DEYG, and LEED…SEED.

The protein belongs to the RNA polymerase beta' chain family. RpoC2 subfamily. In plastids the minimal PEP RNA polymerase catalytic core is composed of four subunits: alpha, beta, beta', and beta''. When a (nuclear-encoded) sigma factor is associated with the core the holoenzyme is formed, which can initiate transcription. Requires Zn(2+) as cofactor.

It is found in the plastid. The protein localises to the chloroplast. It carries out the reaction RNA(n) + a ribonucleoside 5'-triphosphate = RNA(n+1) + diphosphate. DNA-dependent RNA polymerase catalyzes the transcription of DNA into RNA using the four ribonucleoside triphosphates as substrates. This is DNA-directed RNA polymerase subunit beta'' from Agrostis stolonifera (Creeping bentgrass).